Consider the following 195-residue polypeptide: MASSSSAALRPFGTARLTPGRQTGRQTQQQISAPEPMIAIALSDMEYLMRSARSSRSSGRSERQPGCTCCCHIAAGVTVIPRVARFSIEGGLSTHTLMNHSDNRIAVKITCSDNNMYRVTPVYATVEPGQSLPLHIARITSDLIKRDRLCVNILEADGNKEAREIFKKNANTRAPASINMALEATNDNQNHHHQE.

A disordered region spans residues 1–35 (MASSSSAALRPFGTARLTPGRQTGRQTQQQISAPE). Residues 20-30 (GRQTGRQTQQQ) show a composition bias toward low complexity. Positions 76–184 (GVTVIPRVAR…PASINMALEA (109 aa)) constitute an MSP domain.

This is an uncharacterized protein from Caenorhabditis elegans.